The following is a 183-amino-acid chain: Small ribosomal subunit protein bS20c (183 aa).

The N-terminal 68 residues, 1-68 (MAAISMACVS…FQRRGFSVVC (68 aa)), are a transit peptide targeting the chloroplast. Residues 79 to 99 (AAKRTRQAETRRLRNKARKSE) form a disordered region.

As to quaternary structure, component of the chloroplast small ribosomal subunit (SSU). Mature 70S chloroplast ribosomes of higher plants consist of a small (30S) and a large (50S) subunit. The 30S small subunit contains 1 molecule of ribosomal RNA (16S rRNA) and 24 different proteins. The 50S large subunit contains 3 rRNA molecules (23S, 5S and 4.5S rRNA) and 33 different proteins.

It is found in the plastid. Its subcellular location is the chloroplast. Functionally, component of the chloroplast ribosome (chloro-ribosome), a dedicated translation machinery responsible for the synthesis of chloroplast genome-encoded proteins, including proteins of the transcription and translation machinery and components of the photosynthetic apparatus. The chain is Small ribosomal subunit protein bS20c (RPS20) from Spinacia oleracea (Spinach).